A 565-amino-acid polypeptide reads, in one-letter code: Acyl-CoA ligase easD (565 aa).

ATP contacts are provided by residues 213-221, 354-359, Asp-438, Arg-457, and Lys-555; these read TSGTSGKQK and HAYGLT. The tract at residues 284–354 is SBD1; it reads DMQLMLKTIE…KLRPTWKINH (71 aa). Residues 355 to 417 form an SBD2 region; the sequence is AYGLTETGVV…FNSPSCFLGY (63 aa).

This sequence belongs to the ATP-dependent AMP-binding enzyme family.

It participates in antibiotic biosynthesis. Functionally, acyl-CoA ligase; part of the gene cluster that mediates the biosynthesis of emericellamides, secondary metabolites acting as antibiotics. The biosynthesis of emericellamides initiates from the highly reducing polyketide synthase easB which catalyzes the formation of the linear polyketide chain. EasB produces several polyketides that can be further processed by the downstream enzymes. The polyketides are released from easB as linear polyketide carboxylic acids, which are converted to CoA thioesters by the acyl-CoA ligase easD. The substrates are then loaded onto the acyltransferase easC, which shuttles them to the first thiolation (T) domain of the nonribosomal peptide synthetase easA. EasA then performs condensation of the polyketides with one glycine, two alanine, one valine and one leucine residues. A last step of cyclization leads to the production of emericellamides. This Emericella nidulans (strain FGSC A4 / ATCC 38163 / CBS 112.46 / NRRL 194 / M139) (Aspergillus nidulans) protein is Acyl-CoA ligase easD.